A 452-amino-acid polypeptide reads, in one-letter code: Multifunctional glycoside hydrolase (452 aa).

Substrate-binding residues include Gln-17, His-118, and Asn-162. Glu-163 serves as the catalytic Proton donor. A substrate-binding site is contributed by Tyr-303. Residue Glu-361 is the Nucleophile of the active site. Residues Trp-407 and 414–415 (EW) each bind substrate.

Belongs to the glycosyl hydrolase 1 family. Monomer. Homotrimer.

It carries out the reaction Hydrolysis of terminal, non-reducing beta-D-glucosyl residues with release of beta-D-glucose.. The catalysed reaction is Hydrolysis of terminal non-reducing beta-D-galactose residues in beta-D-galactosides.. The enzyme catalyses Hydrolysis of (1-&gt;4)-beta-D-xylans, to remove successive D-xylose residues from the non-reducing termini.. It catalyses the reaction Hydrolysis of (1-&gt;4)-linkages in (1-&gt;4)-beta-D-glucans, to remove successive glucose units.. It carries out the reaction Hydrolysis of (1-&gt;4)-beta-D-glucosidic linkages in cellulose and cellotetraose, releasing cellobiose from the non-reducing ends of the chains.. It participates in glycan metabolism; beta-D-glucan degradation. The protein operates within glycan metabolism; cellulose degradation. Its activity is regulated as follows. Slight activation by Mn(2+), Ni(2+) and K(+). Slight inhibition by Fe(3+), Zn(2+), Co(2+), Mg(2+), Cu(2+), Na(+) and NH4(+). Its function is as follows. Has high beta-D-glucosidase, exoglucanase, beta-D-xylosidase, beta-D-galactosidase, and transgalactosylation activities in vitro. Has a very broad substrate specificity with the highest activity with p-nitrophenyl beta-D-galactopyranoside (pNPGal) as substrate. Active with pNP-beta-D-glucopyranoside (pNPGlu), pNP-beta-D-cellobioside (pNPC), lactose, pNP-beta-D-xylopyranoside (pNPX) and cellobiose in the order of decreasing activity, respectively. Very low activity with soluble polysaccharides synanthrin and locust bean gum. Very low, but detectable activity with insoluble substrates such as cotton and filter paper. No activity with pNP-alpha-L-arabinofuranoside (pNPAr) or carboxymethylcellulose (CMC) as substrates. Synthesizes galactooligosaccharides (GalOS) from lactose. Hydrolyzes pretreated corn stover releasing both glucose and xylose. This multifunctional enzyme may provide C.owensensis the benefit of utilizing a wide variety of available carbon sources in its natural growing environment as the ability to convert a wide range of soluble oligosaccharides to monoses is required in order to assimilate them. The chain is Multifunctional glycoside hydrolase from Caldicellulosiruptor owensensis (strain ATCC 700167 / DSM 13100 / OL).